A 315-amino-acid polypeptide reads, in one-letter code: Cytochrome c biogenesis protein CcsA (315 aa).

7 consecutive transmembrane segments (helical) span residues 17 to 37 (LGFA…WAVA), 72 to 92 (ISNL…AQLF), 101 to 121 (IVSA…SFVL), 146 to 166 (VIMC…GVFL), 221 to 241 (SITA…VWAN), 255 to 272 (TWAL…HTRI), and 282 to 302 (AILA…VNLL).

It belongs to the CcmF/CycK/Ccl1/NrfE/CcsA family. As to quaternary structure, may interact with ccs1.

The protein resides in the cellular thylakoid membrane. Functionally, required during biogenesis of c-type cytochromes (cytochrome c6 and cytochrome f) at the step of heme attachment. This Prochlorococcus marinus (strain NATL2A) protein is Cytochrome c biogenesis protein CcsA.